The primary structure comprises 211 residues: MKKKIIFLRNLGIEHWLTTFNKMNNFIISRNPCTYDEIWFVEHYPIFTQGQSNEQKNLIVSNDIPVVQTNRGGQITYHGPGQQILYFLIDLKRRKMNIRQLINIMEQTVIETLNNFSIQAYTKKKMPGVYINEKKICSLGLRIKKGFTLHGLALNVNMNLTPFNYIHPCGDKNMKMTQIKDFNSNVKLKDVRFILIKELSKFLEIFIINSN.

Positions proline 32–isoleucine 207 constitute a BPL/LPL catalytic domain. Substrate contacts are provided by residues arginine 71 to histidine 78, serine 138 to glycine 140, and glycine 151 to alanine 153. Catalysis depends on cysteine 169, which acts as the Acyl-thioester intermediate.

Belongs to the LipB family.

The protein resides in the cytoplasm. It catalyses the reaction octanoyl-[ACP] + L-lysyl-[protein] = N(6)-octanoyl-L-lysyl-[protein] + holo-[ACP] + H(+). The protein operates within protein modification; protein lipoylation via endogenous pathway; protein N(6)-(lipoyl)lysine from octanoyl-[acyl-carrier-protein]: step 1/2. Its function is as follows. Catalyzes the transfer of endogenously produced octanoic acid from octanoyl-acyl-carrier-protein onto the lipoyl domains of lipoate-dependent enzymes. Lipoyl-ACP can also act as a substrate although octanoyl-ACP is likely to be the physiological substrate. The chain is Octanoyltransferase from Buchnera aphidicola subsp. Acyrthosiphon pisum (strain APS) (Acyrthosiphon pisum symbiotic bacterium).